A 379-amino-acid chain; its full sequence is Cytochrome b (379 aa).

A run of 4 helical transmembrane segments spans residues 33 to 53 (FGSL…FLAM), 77 to 98 (WLIR…YLHI), 113 to 133 (WNIG…GYVL), and 178 to 198 (FFAF…IHFF). 2 residues coordinate heme b: His-83 and His-97. His-182 and His-196 together coordinate heme b. Residue His-201 coordinates a ubiquinone. The next 4 membrane-spanning stretches (helical) occupy residues 226 to 246 (IKDI…VLFS), 288 to 308 (LGGV…PMLH), 320 to 340 (FSQC…WIGG), and 347 to 367 (YITI…IVSR).

Belongs to the cytochrome b family. In terms of assembly, the cytochrome bc1 complex contains 11 subunits: 3 respiratory subunits (MT-CYB, CYC1 and UQCRFS1), 2 core proteins (UQCRC1 and UQCRC2) and 6 low-molecular weight proteins (UQCRH/QCR6, UQCRB/QCR7, UQCRQ/QCR8, UQCR10/QCR9, UQCR11/QCR10 and a cleavage product of UQCRFS1). This cytochrome bc1 complex then forms a dimer. It depends on heme b as a cofactor.

It localises to the mitochondrion inner membrane. Functionally, component of the ubiquinol-cytochrome c reductase complex (complex III or cytochrome b-c1 complex) that is part of the mitochondrial respiratory chain. The b-c1 complex mediates electron transfer from ubiquinol to cytochrome c. Contributes to the generation of a proton gradient across the mitochondrial membrane that is then used for ATP synthesis. This is Cytochrome b (MT-CYB) from Dolichotis patagonum (Patagonian mara).